A 156-amino-acid chain; its full sequence is Cyanate hydratase (156 aa).

Active-site residues include Arg96, Glu99, and Ser122.

This sequence belongs to the cyanase family.

It carries out the reaction cyanate + hydrogencarbonate + 3 H(+) = NH4(+) + 2 CO2. In terms of biological role, catalyzes the reaction of cyanate with bicarbonate to produce ammonia and carbon dioxide. In Pseudomonas paraeruginosa (strain DSM 24068 / PA7) (Pseudomonas aeruginosa (strain PA7)), this protein is Cyanate hydratase.